The primary structure comprises 168 residues: Alpha-N-acetylgalactosamine-specific lectin (168 aa).

Residues Met1–Ala18 form the signal peptide. The C-type lectin domain occupies Tyr38–Lys163. 2 disulfide bridges follow: Cys59–Cys162 and Cys136–Cys154.

In terms of assembly, monomer, homodimer and homooligomer.

Its function is as follows. Alpha-N-acetylgalactosamine-specific lectin. The oligomeric form has Ca(2+)-dependent hemagglutination activity towards sheep erythrocytes. Its hemagglutination activity is inhibited by various monosaccharides, oligosaccharides and glycopeptides, including inhibition by GalNAc, blood group A trisaccharide, Tn antigen, mucin and asialomucin. This Patiria pectinifera (Starfish) protein is Alpha-N-acetylgalactosamine-specific lectin.